The following is a 173-amino-acid chain: Bilin biosynthesis protein PecF (173 aa).

The protein belongs to the CpcE/RpcE/PecE family.

An enzyme involved in the biosynthesis of bilin. The sequence is that of Bilin biosynthesis protein PecF (pecF) from Nostoc sp. (strain PCC 7120 / SAG 25.82 / UTEX 2576).